A 274-amino-acid chain; its full sequence is 4-diphosphocytidyl-2-C-methyl-D-erythritol kinase (274 aa).

The active site involves K10. Residue 101–111 (PTQAGLGGGSA) coordinates ATP. D143 is an active-site residue.

This sequence belongs to the GHMP kinase family. IspE subfamily.

The catalysed reaction is 4-CDP-2-C-methyl-D-erythritol + ATP = 4-CDP-2-C-methyl-D-erythritol 2-phosphate + ADP + H(+). It functions in the pathway isoprenoid biosynthesis; isopentenyl diphosphate biosynthesis via DXP pathway; isopentenyl diphosphate from 1-deoxy-D-xylulose 5-phosphate: step 3/6. Its function is as follows. Catalyzes the phosphorylation of the position 2 hydroxy group of 4-diphosphocytidyl-2C-methyl-D-erythritol. The protein is 4-diphosphocytidyl-2-C-methyl-D-erythritol kinase of Helicobacter pylori (strain J99 / ATCC 700824) (Campylobacter pylori J99).